An 854-amino-acid polypeptide reads, in one-letter code: DNA gyrase subunit A (854 aa).

Positions 42-510 (LPEVRDGLKP…ADGQVSDEDL (469 aa)) constitute a Topo IIA-type catalytic domain. The active-site O-(5'-phospho-DNA)-tyrosine intermediate is the Tyr129. Positions 537–543 (QKRGGKG) match the GyrA-box motif.

This sequence belongs to the type II topoisomerase GyrA/ParC subunit family. As to quaternary structure, heterotetramer, composed of two GyrA and two GyrB chains. In the heterotetramer, GyrA contains the active site tyrosine that forms a transient covalent intermediate with DNA, while GyrB binds cofactors and catalyzes ATP hydrolysis.

The protein localises to the cytoplasm. The catalysed reaction is ATP-dependent breakage, passage and rejoining of double-stranded DNA.. With respect to regulation, DNA supercoiling is inhibited by the coumarin antibiotic novobiocin. Also inhibited by the fluoroquinolones ciprofloxacin and moxifloxacin. Functionally, a type II topoisomerase that negatively supercoils closed circular double-stranded (ds) DNA in an ATP-dependent manner to modulate DNA topology and maintain chromosomes in an underwound state; also catalyzes the interconversion of other topological isomers of double-stranded DNA rings, including catenanes. At comparable concentrations has a stronger decatenation activity than E.coli, which is inhibited by ciprofloxacin and novobiocin. Cleaves dsDNA at the sequence 5'-AT/GGCC-3', leaving a 4 base overhang. Relaxes negatively supercoiled DNA in an ATP-independent manner. Its function is as follows. Negative supercoiling favors strand separation, and DNA replication, transcription, recombination and repair, all of which involve strand separation. Type II topoisomerases break and join 2 DNA strands simultaneously in an ATP-dependent manner. The polypeptide is DNA gyrase subunit A (Mycolicibacterium smegmatis (Mycobacterium smegmatis)).